The primary structure comprises 986 residues: Rho guanine nucleotide exchange factor 2 (986 aa).

The Phorbol-ester/DAG-type zinc finger occupies Gly39–Cys86. Residues Ser109, Ser122, Ser129, Ser133, and Ser137 each carry the phosphoserine modification. The segment at Arg131–Asp161 is interaction with DYNLT1. Ser143 bears the Phosphoserine; by PAK4 mark. A phosphoserine mark is found at Ser151, Ser163, Ser172, Ser174, and Ser177. Positions Lys235–Gly432 constitute a DH domain. Lys353 carries the N6-acetyllysine modification. Residues Lys472 to Arg571 form the PH domain. Residues Glu587–Lys611 are a coiled coil. A phosphoserine mark is found at Ser645 and Ser648. Thr679 is modified (phosphothreonine; by MAPK1 or MAPK3). The segment at Pro683–Ala705 is disordered. A phosphoserine mark is found at Ser691, Ser696, Ser711, and Ser782. Residues Glu798–Glu867 are a coiled coil. Positions Ala862–Ser986 are disordered. A Phosphoserine; by PAK1 and AURKA modification is found at Ser886. Phosphotyrosine is present on Tyr894. Ser896 carries the post-translational modification Phosphoserine; by PAK4. The segment covering Arg920 to Asp939 has biased composition (basic and acidic residues). 3 positions are modified to phosphoserine: Ser932, Ser940, and Ser941. The segment covering Ser941–Glu950 has biased composition (acidic residues). Residue Thr945 is modified to Phosphothreonine. Phosphoserine occurs at positions 947, 952, 953, 956, and 960.

Found in a complex composed at least of ARHGEF2, NOD2 and RIPK2. Interacts with RIPK2; the interaction mediates tyrosine phosphorylation of RIPK2 by Src kinase CSK. Interacts with RIPK1 and RIPK3. Interacts with YWHAZ/14-3-3 zeta; when phosphorylated at Ser-886. Interacts with the kinases PAK4, AURKA and MAPK1. Interacts with RHOA and RAC1. Interacts with NOD1. Interacts (via the N-terminal zinc finger) with CAPN6 (via domain II). Interacts with DYNLT1. In terms of processing, phosphorylation of Ser-886 by PAK1 induces binding to protein YWHAZ, promoting its relocation to microtubules and the inhibition of its activity. Phosphorylated by AURKA and CDK1 during mitosis, which negatively regulates its activity. Phosphorylation by MAPK1 or MAPK3 increases nucleotide exchange activity. Phosphorylation by PAK4 releases GEF-H1 from the microtubules. Phosphorylated on serine, threonine and tyrosine residues in a RIPK2-dependent manner.

It localises to the cytoplasm. Its subcellular location is the cytoskeleton. The protein resides in the cell junction. It is found in the tight junction. The protein localises to the golgi apparatus. It localises to the spindle. Its subcellular location is the cell projection. The protein resides in the ruffle membrane. It is found in the cytoplasmic vesicle. In terms of biological role, activates Rho-GTPases by promoting the exchange of GDP for GTP. May be involved in epithelial barrier permeability, cell motility and polarization, dendritic spine morphology, antigen presentation, leukemic cell differentiation, cell cycle regulation, innate immune response, and cancer. Binds Rac-GTPases, but does not seem to promote nucleotide exchange activity toward Rac-GTPases, which was uniquely reported in PubMed:9857026. May stimulate instead the cortical activity of Rac. Inactive toward CDC42, TC10, or Ras-GTPases. Forms an intracellular sensing system along with NOD1 for the detection of microbial effectors during cell invasion by pathogens. Required for RHOA and RIP2 dependent NF-kappaB signaling pathways activation upon S.flexneri cell invasion. Involved not only in sensing peptidoglycan (PGN)-derived muropeptides through NOD1 that is independent of its GEF activity, but also in the activation of NF-kappaB by Shigella effector proteins (IpgB2 and OspB) which requires its GEF activity and the activation of RhoA. Involved in innate immune signaling transduction pathway promoting cytokine IL6/interleukin-6 and TNF-alpha secretion in macrophage upon stimulation by bacterial peptidoglycans; acts as a signaling intermediate between NOD2 receptor and RIPK2 kinase. Contributes to the tyrosine phosphorylation of RIPK2 through Src tyrosine kinase leading to NF-kappaB activation by NOD2. Overexpression activates Rho-, but not Rac-GTPases, and increases paracellular permeability. Involved in neuronal progenitor cell division and differentiation. Involved in the migration of precerebellar neurons. The polypeptide is Rho guanine nucleotide exchange factor 2 (ARHGEF2) (Homo sapiens (Human)).